Consider the following 82-residue polypeptide: Beta-defensin 119 (82 aa).

A signal peptide spans 1–19; it reads MKFFLFFVILLAMEPVISG. Cystine bridges form between cysteine 26/cysteine 53, cysteine 33/cysteine 47, and cysteine 37/cysteine 54.

This sequence belongs to the beta-defensin family.

Its subcellular location is the secreted. In terms of biological role, has antibacterial activity. This Canis lupus familiaris (Dog) protein is Beta-defensin 119 (DEFB119).